A 540-amino-acid polypeptide reads, in one-letter code: MYGIALDLGTSGFRTQLIDLETKETLKTVITMGHPLPGGNVMDHLDFAITTGEDVAHEVIIETIRRMFLQFDIDLSRVERLAVCGNPIQLSLFQNTEIRDLAYAGENKQKMLGVRNVKRDARVFPASEIFGEKYLSNCEIIVPPAIKHEIGADALAMMLETDFLIQPEPSLVTDYGTNAEMALKIGDRIITASAAAGPAIEGQGISSGMLASPGAICDVKPEGQYWRIIVLDREMEKQDAYLIDPVKGEIKDSYGFEAVGITGTGVISAFAMALKGGLIEKFPKLPNGKLILGPGIEITEKDVEEAGKAIGAIRAAHMTLIVESGIKYEDLEYAYMSGASGAYVDAEDARRLGAAPGYAKKIVQFGNTSLALARELVLEKSRLDDVIEIAKKITADHLMMATSETFNNFYLCELSYWTQGMPLETYDQMLELYGLPPLPKILEHVTIEKRVSKDIEEVGSGGLSILKEIGIILEVPVEKCVYCKKCVKECPEAALEIVERDGQRIAKYDSQKCLGTSCRRCVGVCPEDAIDITKLKITAK.

2 consecutive 4Fe-4S ferredoxin-type domains span residues 471-500 (IILE…IVER) and 504-535 (RIAK…ITKL). [4Fe-4S] cluster is bound by residues Cys-480, Cys-483, Cys-486, Cys-490, Cys-513, Cys-518, Cys-521, and Cys-525.

As to quaternary structure, monomer. The cofactor is [4Fe-4S] cluster.

It carries out the reaction 2 Co(II)-[methylamine-specific corrinoid protein] + AH2 + ATP + H2O = 2 Co(I)-[methylamine-specific corrinoid protein] + A + ADP + phosphate + 3 H(+). The catalysed reaction is 2 Co(II)-[dimethylamine-specific corrinoid protein] + AH2 + ATP + H2O = 2 Co(I)-[dimethylamine-specific corrinoid protein] + A + ADP + phosphate + 3 H(+). It catalyses the reaction 2 Co(II)-[trimethylamine-specific corrinoid protein] + AH2 + ATP + H2O = 2 Co(I)-[trimethylamine-specific corrinoid protein] + A + ADP + phosphate + 3 H(+). Its pathway is one-carbon metabolism; methanogenesis from methylamine. It participates in one-carbon metabolism; methanogenesis from dimethylamine. The protein operates within one-carbon metabolism; methanogenesis from trimethylamine. In terms of biological role, reductase required for the activation of corrinoid-dependent methylamine methyltransferase reactions during methanogenesis. Mediates the ATP-dependent reduction of corrinoid proteins from the inactive cobalt(II) state to the active cobalt(I) state. Acts on the corrinoid proteins involved in methanogenesis from monomethylamine (MMA), dimethylamine (DMA) and trimethylamine (TMA), namely MtmC, MtbC and MttC, respectively. This chain is [Co(II) methylated amine-specific corrinoid protein] reductase, found in Methanosarcina barkeri.